Here is a 138-residue protein sequence, read N- to C-terminus: Protein SPMIP3 (138 aa).

The sequence is that of Protein SPMIP3 (SPMIP3) from Bos taurus (Bovine).